The chain runs to 328 residues: Endochitinase (328 aa).

The N-terminal stretch at 1 to 27 is a signal peptide; sequence MKKNRMMMMIWSVGVVWMLLLVGGSYG. Positions 28-68 constitute a Chitin-binding type-1 domain; the sequence is EQCGRQAGGALCPGGNCCSQFGWCGSTTDYCGPGCQSQCGG. Intrachain disulfides connect Cys-30–Cys-45, Cys-39–Cys-51, Cys-44–Cys-58, Cys-62–Cys-66, Cys-97–Cys-159, Cys-170–Cys-178, and Cys-277–Cys-309. Glu-141 acts as the Proton donor in catalysis. The propeptide at 318 to 328 is removed in mature form; sequence SLLLSDLVTSQ.

Belongs to the glycosyl hydrolase 19 family. Chitinase class I subfamily.

The protein localises to the vacuole. The catalysed reaction is Random endo-hydrolysis of N-acetyl-beta-D-glucosaminide (1-&gt;4)-beta-linkages in chitin and chitodextrins.. Defense against chitin-containing fungal pathogens. This is Endochitinase from Phaseolus vulgaris (Kidney bean).